Here is a 189-residue protein sequence, read N- to C-terminus: Cytidylate kinase (189 aa).

Position 7–15 (7–15 (GPPGSGKTS)) interacts with ATP.

Belongs to the cytidylate kinase family. Type 2 subfamily.

It localises to the cytoplasm. It carries out the reaction CMP + ATP = CDP + ADP. It catalyses the reaction dCMP + ATP = dCDP + ADP. The sequence is that of Cytidylate kinase from Saccharolobus islandicus (strain Y.N.15.51 / Yellowstone #2) (Sulfolobus islandicus).